Reading from the N-terminus, the 196-residue chain is Nucleoid occlusion factor SlmA (196 aa).

Residues 7–68 enclose the HTH tetR-type domain; the sequence is PNRRDEILQA…GLIEFIEESI (62 aa). Positions 31–50 form a DNA-binding region, H-T-H motif; sequence TTAKLAKQVGVSEAALYRHF. Residues 71–93 adopt a coiled-coil conformation; sequence RVNRILEDEKDTLKRIELLLKLL.

Belongs to the nucleoid occlusion factor SlmA family. As to quaternary structure, homodimer. Interacts with FtsZ.

The protein localises to the cytoplasm. Its subcellular location is the nucleoid. Functionally, required for nucleoid occlusion (NO) phenomenon, which prevents Z-ring formation and cell division over the nucleoid. Acts as a DNA-associated cell division inhibitor that binds simultaneously chromosomal DNA and FtsZ, and disrupts the assembly of FtsZ polymers. SlmA-DNA-binding sequences (SBS) are dispersed on non-Ter regions of the chromosome, preventing FtsZ polymerization at these regions. The chain is Nucleoid occlusion factor SlmA from Aliivibrio fischeri (strain MJ11) (Vibrio fischeri).